The chain runs to 656 residues: Spermatogenesis-associated protein 13 (656 aa).

Residues 1–12 (MHPASVTTTSQD) show a composition bias toward polar residues. The interval 1 to 26 (MHPASVTTTSQDPCAPSGSCRGGRRR) is disordered. At Ser82 the chain carries Phosphoserine. A disordered region spans residues 85 to 115 (IGLDRVGRRRQMKTSNVSSDGGAESSALVDD). The interval 102–154 (SSDGGAESSALVDDNGSEEDFSYEELCQANPRYLQPGGEQLAINELISDGSVV) is ABR (APC-binding region) domain. Ser118 carries the post-translational modification Phosphoserine. Residues 151–210 (GSVVCAEALWDHVTMDDQELGFKAGDVIQVLEASNKDWWWGRNEDKEAWFPASFVRLRVN) form the SH3 domain. The interval 215–242 (PENCSSSHGEEQDEDTSKARHKHPESQQ) is disordered. In terms of domain architecture, DH spans 244–428 (MRTNVIQEIM…KNVACLINER (185 aa)). The PH domain occupies 459–565 (ELIHSGELTK…WLQAYADERR (107 aa)). A C-terminal tail region spans residues 565–656 (RRVQEDQQMG…TFHKLTPFRK (92 aa)).

As to quaternary structure, interacts (via ABR and SH3 domain) with APC. The binding of APC enhances its GEF activity by relieving it from an autoinhibitory conformation, in which the ABR and SH3 domains are associated with the C-terminal tail. Interacts (via C-terminal tail) with PPP1R9B (via C-terminus). Interacts with RAC1. In terms of tissue distribution, expression is aberrantly enhanced in most colorectal tumors.

Its subcellular location is the cytoplasm. It is found in the cell projection. It localises to the filopodium. The protein localises to the lamellipodium. The protein resides in the ruffle membrane. Its subcellular location is the podosome. Both the ABR and the SH3 domains contribute to maintaining the protein in an inhibited conformation by associating with the C-terminal tail. Binding of these domains to the C-terminal tail inhibits the activity of the protein by blocking a region that is required for its GEF activity. Its function is as follows. Acts as a guanine nucleotide exchange factor (GEF) for RHOA, RAC1 and CDC42 GTPases. Regulates cell migration and adhesion assembly and disassembly through a RAC1, PI3K, RHOA and AKT1-dependent mechanism. Increases both RAC1 and CDC42 activity, but decreases the amount of active RHOA. Required for MMP9 up-regulation via the JNK signaling pathway in colorectal tumor cells. Involved in tumor angiogenesis and may play a role in intestinal adenoma formation and tumor progression. This is Spermatogenesis-associated protein 13 (Spata13) from Mus musculus (Mouse).